Consider the following 193-residue polypeptide: NADH-quinone oxidoreductase subunit B (193 aa).

4 residues coordinate [4Fe-4S] cluster: C72, C73, C137, and C167.

Belongs to the complex I 20 kDa subunit family. As to quaternary structure, NDH-1 is composed of 14 different subunits. Subunits NuoB, C, D, E, F, and G constitute the peripheral sector of the complex. It depends on [4Fe-4S] cluster as a cofactor.

The protein resides in the cell inner membrane. It catalyses the reaction a quinone + NADH + 5 H(+)(in) = a quinol + NAD(+) + 4 H(+)(out). Its function is as follows. NDH-1 shuttles electrons from NADH, via FMN and iron-sulfur (Fe-S) centers, to quinones in the respiratory chain. The immediate electron acceptor for the enzyme in this species is believed to be ubiquinone. Couples the redox reaction to proton translocation (for every two electrons transferred, four hydrogen ions are translocated across the cytoplasmic membrane), and thus conserves the redox energy in a proton gradient. The polypeptide is NADH-quinone oxidoreductase subunit B (Bartonella bacilliformis (strain ATCC 35685 / KC583 / Herrer 020/F12,63)).